Reading from the N-terminus, the 267-residue chain is Putative N-acetylmuramoyl-L-alanine amidase RC0497 (267 aa).

A disordered region spans residues 1–25; it reads MSKSKAIENNGISNTNSPNGKYMAP. A compositionally biased stretch (polar residues) spans 10–19; that stretch reads NGISNTNSPN. The N-acetylmuramoyl-L-alanine amidase domain occupies 33–141; that stretch reads TCVVITYSVS…NLDLKHDLVG (109 aa).

This sequence belongs to the N-acetylmuramoyl-L-alanine amidase 2 family.

Its subcellular location is the secreted. The enzyme catalyses Hydrolyzes the link between N-acetylmuramoyl residues and L-amino acid residues in certain cell-wall glycopeptides.. The chain is Putative N-acetylmuramoyl-L-alanine amidase RC0497 from Rickettsia conorii (strain ATCC VR-613 / Malish 7).